Reading from the N-terminus, the 109-residue chain is MKTLPKERRYETLSYLPPLSDQQIARQIEYMVREGYIPAVEFNEDSDATTCYWTMWKLPLFHATSTQEVLGEVRECRTEYPNCYIRVVGFDNIKQCQSVSFIVHKPNRY.

It belongs to the RuBisCO small chain family. Heterohexadecamer of 8 large and 8 small subunits.

It is found in the carboxysome. Its function is as follows. RuBisCO catalyzes two reactions: the carboxylation of D-ribulose 1,5-bisphosphate, the primary event in carbon dioxide fixation, as well as the oxidative fragmentation of the pentose substrate in the photorespiration process. Both reactions occur simultaneously and in competition at the same active site. Although the small subunit is not catalytic it is essential for maximal activity. The chain is Ribulose bisphosphate carboxylase small subunit from Prochlorothrix hollandica.